The chain runs to 620 residues: mRNA cap guanine-N(7) methyltransferase (620 aa).

2 disordered regions span residues 1-176 (MLPP…APSS) and 193-304 (AHAN…DDEY). A compositionally biased stretch (polar residues) spans 29–44 (RSPSMSLSPRSQNQSL). Composition is skewed to low complexity over residues 45–60 (PYPSSRPGSAAGSAHP) and 136–157 (PQPTTTPSSPSTSQHTPYTPHH). An mRNA cap 0 methyltransferase domain is found at 345-620 (SPIIGLKKFN…LYMGFAFEKM (276 aa)). 354–355 (NN) serves as a coordination point for mRNA. 6 residues coordinate S-adenosyl-L-methionine: Lys358, Gly377, Asp399, Asp428, Gln454, and Tyr459.

The protein belongs to the class I-like SAM-binding methyltransferase superfamily. mRNA cap 0 methyltransferase family.

It is found in the nucleus. The catalysed reaction is a 5'-end (5'-triphosphoguanosine)-ribonucleoside in mRNA + S-adenosyl-L-methionine = a 5'-end (N(7)-methyl 5'-triphosphoguanosine)-ribonucleoside in mRNA + S-adenosyl-L-homocysteine. Its function is as follows. Responsible for methylating the 5'-cap structure of mRNAs. The sequence is that of mRNA cap guanine-N(7) methyltransferase (ABD1) from Cryptococcus neoformans var. neoformans serotype D (strain JEC21 / ATCC MYA-565) (Filobasidiella neoformans).